A 347-amino-acid polypeptide reads, in one-letter code: Protein RecA (347 aa).

An ATP-binding site is contributed by 65–72 (GPESSGKT).

This sequence belongs to the RecA family.

Its subcellular location is the cytoplasm. In terms of biological role, can catalyze the hydrolysis of ATP in the presence of single-stranded DNA, the ATP-dependent uptake of single-stranded DNA by duplex DNA, and the ATP-dependent hybridization of homologous single-stranded DNAs. It interacts with LexA causing its activation and leading to its autocatalytic cleavage. The sequence is that of Protein RecA from Marinobacter nauticus (strain ATCC 700491 / DSM 11845 / VT8) (Marinobacter aquaeolei).